Consider the following 25-residue polypeptide: M-poneritoxin-Na1b (25 aa).

The protein belongs to the non-disulfide-bridged peptide (NDBP) superfamily. Medium-length antimicrobial peptide (group 3) family. Ponericin-W subfamily. As to expression, expressed by the venom gland.

It is found in the secreted. The protein resides in the target cell membrane. Its function is as follows. Membrane-perturbating peptide with multiple activities. It is insecticidal, since it induces reversible paralysis in insects (L.cuprina) after 1 hour, but fails to kill flies. It shows a relatively strong and broad-spectrum antibacterial activity against both Gram-positive and Gram-negative bacteria (MIC&lt;20 uM). It is also anthelmintic, since it potently inhibits the larval development of the major pathogenic nematode of ruminants (H.contortus, IC(50)=2.8 uM). Interestingly, only at 10 uM, it increases adult males motility of the other nematode B.malayi for 24 hours post-treatment, followed by a reduction in motility for the rest of the experiment. It shows cytotoxic activity against HEK293 cells (EC(50)=4-6 uM) and induces hemolysis in human erythrocytes (EC(50)=40-62 uM). In addition, it causes an important increase in intracellular calcium concentration on neuronal and epithelial cell lines, which supports a non-specific membrane perturbation mechanism of action. In vivo, it induces pain by intraplantar injection into mice, suggesting a defensive function against vertebrate predators. The chain is M-poneritoxin-Na1b from Neoponera apicalis (Ant).